Here is a 237-residue protein sequence, read N- to C-terminus: MRPSGRTASQIRPVTITRQYTCHAEGSVLVEFGNTKVLCNATVEEGVPRFMKGQGKGWVTAEYSMLPRATHTRSGREAARGKQGGRTLEIQRLIARSLRAALDLKLLGENTITLDCDVIQADGGTRTASITGACVALVDALTYMRSKGIIKTNPLKHMIAALSVGIYEGTPIADLEYTEDSEAETDMNIVMTETGKLIEVQGTAEGEPFSFEELDELLKIGKHGLRELFDIQKAALA.

Residues Arg86 and Gly124 to Arg126 contribute to the phosphate site.

The protein belongs to the RNase PH family. Homohexameric ring arranged as a trimer of dimers.

It catalyses the reaction tRNA(n+1) + phosphate = tRNA(n) + a ribonucleoside 5'-diphosphate. Functionally, phosphorolytic 3'-5' exoribonuclease that plays an important role in tRNA 3'-end maturation. Removes nucleotide residues following the 3'-CCA terminus of tRNAs; can also add nucleotides to the ends of RNA molecules by using nucleoside diphosphates as substrates, but this may not be physiologically important. Probably plays a role in initiation of 16S rRNA degradation (leading to ribosome degradation) during starvation. The protein is Ribonuclease PH of Alteromonas mediterranea (strain DSM 17117 / CIP 110805 / LMG 28347 / Deep ecotype).